A 550-amino-acid chain; its full sequence is Cytochrome P450 monooxygenase hasH (550 aa).

A helical membrane pass occupies residues I39–I59. C493 is a heme binding site.

Belongs to the cytochrome P450 family. Requires heme as cofactor.

The protein resides in the membrane. Its pathway is secondary metabolite biosynthesis. Its function is as follows. Cytochrome P450 monooxygenase; part of the gene cluster that mediates the biosynthesis of hexadehydro-astechrome (HAS), a tryptophan-derived iron(III)-complex that acts as a virulence factor in infected mice. Within the pathway, hasH, with the O-methyltransferase hasC and the FAD-linked oxidoreductase hasG, convert the hasE-prenylated Trp-Ala dipeptide into an O-methylated diketopiperazine that is then released from the hasD NRPS. The HAS biosynthesis begins with the synthesis of a tethered Trp-Ala dipeptide by the NRPS hasD. The 7-dimethylallyltryptophan synthase hasE then catalyzes the prenylation of the hasD-tethered tryptophan or the resulting tethered Trp-Ala dipeptide at the C-7 position of the indole moiety. HAS biosynthesis continues via tethered intermediates with the succesive action of the cytochrome P450 monooxygenase hasH, the O-methyltransferase hasC, and the FAD-linked oxidoreductase hasG. The resulting O-methylated diketopiperazine is then released from hasD. Finally, three O-methylated diketopiperazine molecules assemble in a trimeric complex with Fe(III) to produce hexadehydro-astechrome. The polypeptide is Cytochrome P450 monooxygenase hasH (Aspergillus fumigatus (strain CBS 144.89 / FGSC A1163 / CEA10) (Neosartorya fumigata)).